A 202-amino-acid polypeptide reads, in one-letter code: Probable chemoreceptor glutamine deamidase CheD (202 aa).

This sequence belongs to the CheD family.

The enzyme catalyses L-glutaminyl-[protein] + H2O = L-glutamyl-[protein] + NH4(+). Functionally, probably deamidates glutamine residues to glutamate on methyl-accepting chemotaxis receptors (MCPs), playing an important role in chemotaxis. In Thiobacillus denitrificans (strain ATCC 25259 / T1), this protein is Probable chemoreceptor glutamine deamidase CheD.